Here is a 557-residue protein sequence, read N- to C-terminus: Ribonuclease J 2 (557 aa).

Zn(2+) contacts are provided by His76, His78, His144, and Glu166. 366–370 (HASSH) lines the substrate pocket.

Belongs to the metallo-beta-lactamase superfamily. RNA-metabolizing metallo-beta-lactamase-like family. Bacterial RNase J subfamily. In terms of assembly, homodimer, may be a subunit of the RNA degradosome. Zn(2+) is required as a cofactor.

It is found in the cytoplasm. Its function is as follows. An RNase that has 5'-3' exonuclease and possibly endoonuclease activity. Involved in maturation of rRNA and in some organisms also mRNA maturation and/or decay. In Staphylococcus epidermidis (strain ATCC 35984 / DSM 28319 / BCRC 17069 / CCUG 31568 / BM 3577 / RP62A), this protein is Ribonuclease J 2.